We begin with the raw amino-acid sequence, 117 residues long: Ig heavy chain V region RF (117 aa).

The N-terminal stretch at 1–19 is a signal peptide; that stretch reads MNFGLRLIFLVLVLKGVLC. The segment at 20 to 49 is framework-1; sequence DVKLVESGGGLVKLGGSLKLSCAASGFTFS. A disulfide bridge links Cys41 with Cys115. Residues 50 to 54 form a complementarity-determining-1 region; sequence SYYMS. Residues 55–68 form a framework-2 region; it reads WVRQTPEKRLELVA. Positions 69 to 85 are complementarity-determining-2; it reads AINSNGGSTYYPDTVKG. The interval 86 to 117 is framework-3; the sequence is RFTISRDNAKNTLYLQMSSLKSEDTALYYCAR.

In Mus musculus (Mouse), this protein is Ig heavy chain V region RF.